The following is a 260-amino-acid chain: ATP synthase subunit a (260 aa).

A run of 6 helical transmembrane segments spans residues 37–57 (FTNA…FMTL), 95–115 (FFPF…IGMF), 125–145 (IVVT…TGFV), 154–174 (VFVP…IEII), 191–211 (MLAG…FMTM), and 233–253 (EFLV…MYLH).

Belongs to the ATPase A chain family. As to quaternary structure, F-type ATPases have 2 components, CF(1) - the catalytic core - and CF(0) - the membrane proton channel. CF(1) has five subunits: alpha(3), beta(3), gamma(1), delta(1), epsilon(1). CF(0) has three main subunits: a(1), b(2) and c(9-12). The alpha and beta chains form an alternating ring which encloses part of the gamma chain. CF(1) is attached to CF(0) by a central stalk formed by the gamma and epsilon chains, while a peripheral stalk is formed by the delta and b chains.

It localises to the cell inner membrane. In terms of biological role, key component of the proton channel; it plays a direct role in the translocation of protons across the membrane. The chain is ATP synthase subunit a from Parvibaculum lavamentivorans (strain DS-1 / DSM 13023 / NCIMB 13966).